Here is a 317-residue protein sequence, read N- to C-terminus: MANLKEIRDRIKSVKNTRKITEAMRLVAAAKVRRAQEQVLRSRPFADRLARLLENLQARMRFEDADAPLLEQRAVQTITLMAVTGDRGLCGGYNSNIIKRTEKRFAELQRQGYKVALVLIGRKAISYFTNRNYPIQATFTGLEQVPTADEAGSIASEIFAEFLSETSDRVEIIFTKFINLVSCKPVVQTLLPLDPQGIAEADDEIFRLTTKEGRLSVEAGSAPENSQPALPSDIVFEQSPDQLLNALLPLYLQNQLLRSLQESAASELASRMTAMNNASDNAKELAKTLTLDYNKARQAAITQEILEVVGGSAAAGA.

It belongs to the ATPase gamma chain family. As to quaternary structure, F-type ATPases have 2 components, CF(1) - the catalytic core - and CF(0) - the membrane proton channel. CF(1) has five subunits: alpha(3), beta(3), gamma(1), delta(1), epsilon(1). CF(0) has three main subunits: a, b and c.

The protein localises to the cellular thylakoid membrane. Produces ATP from ADP in the presence of a proton gradient across the membrane. The gamma chain is believed to be important in regulating ATPase activity and the flow of protons through the CF(0) complex. The protein is ATP synthase gamma chain of Synechococcus sp. (strain CC9311).